The primary structure comprises 625 residues: Interferon-induced GTP-binding protein MxE (625 aa).

The region spanning 40-313 (DLNLPAIAVI…LVEHIAKNLP (274 aa)) is the Dynamin-type G domain. The G1 motif stretch occupies residues 50 to 57 (GDQSSGKS). 50–57 (GDQSSGKS) is a binding site for GTP. Residues 75–77 (VTR) form a G2 motif region. The segment at 151-154 (DLPG) is G3 motif. GTP contacts are provided by residues 151 to 155 (DLPGI) and 220 to 223 (TKPD). The G4 motif stretch occupies residues 220 to 223 (TKPD). Residues 252–255 (KCRG) form a G5 motif region. Residues 536–625 (VREMAYHLTS…RVLSKFVHSA (90 aa)) form the GED domain.

Belongs to the TRAFAC class dynamin-like GTPase superfamily. Dynamin/Fzo/YdjA family.

Its subcellular location is the cytoplasm. The sequence is that of Interferon-induced GTP-binding protein MxE (mxe) from Danio rerio (Zebrafish).